Reading from the N-terminus, the 327-residue chain is Putative HTH-type transcriptional regulatory protein MmarC6_0210 (327 aa).

The 56-residue stretch at 128 to 183 folds into the HTH cro/C1-type domain; the sequence is LRETREKLKISVGELAEISRVSRKTIYKYEQNEANPSAEVAIKIEEYLDVPLIKGI. Positions 139-158 form a DNA-binding region, H-T-H motif; the sequence is VGELAEISRVSRKTIYKYEQ.

This chain is Putative HTH-type transcriptional regulatory protein MmarC6_0210, found in Methanococcus maripaludis (strain C6 / ATCC BAA-1332).